A 445-amino-acid chain; its full sequence is Histidinol dehydrogenase (445 aa).

Residues Tyr-130, Gln-192, and Asn-215 each contribute to the NAD(+) site. Ser-238, Gln-260, and His-263 together coordinate substrate. Residues Gln-260 and His-263 each contribute to the Zn(2+) site. Active-site proton acceptor residues include Glu-328 and His-329. The substrate site is built by His-329, Asp-362, Glu-416, and His-421. Position 362 (Asp-362) interacts with Zn(2+). His-421 is a binding site for Zn(2+).

It belongs to the histidinol dehydrogenase family. Zn(2+) is required as a cofactor.

The enzyme catalyses L-histidinol + 2 NAD(+) + H2O = L-histidine + 2 NADH + 3 H(+). The protein operates within amino-acid biosynthesis; L-histidine biosynthesis; L-histidine from 5-phospho-alpha-D-ribose 1-diphosphate: step 9/9. In terms of biological role, catalyzes the sequential NAD-dependent oxidations of L-histidinol to L-histidinaldehyde and then to L-histidine. The protein is Histidinol dehydrogenase of Gloeobacter violaceus (strain ATCC 29082 / PCC 7421).